The following is a 2474-amino-acid chain: Polyprotein P1234 (2474 aa).

An Alphavirus-like MT domain is found at 28 to 259; that stretch reads EPRQVTPNDH…ESRKLLKSWH (232 aa). The active-site For mRNA-capping enzyme nsP1 activity is the H37. Positions 79, 129, 134, and 141 each coordinate Zn(2+). The segment at 295 to 450 is membrane-binding and oligomerization; the sequence is GLYGKTTGYA…QKVQAEFDSF (156 aa). Residues C417 and C419 are each lipidated (S-palmitoyl cysteine; by host). The disordered stretch occupies residues 482 to 502; it reads PYSGDAQEARDAEKEAEEERE. Residues 690-842 form the (+)RNA virus helicase ATP-binding domain; the sequence is DLTNPPYHEF…HNICTQVYHK (153 aa). Residue 721-728 participates in a ribonucleoside 5'-triphosphate binding; the sequence is GVPGSGKS. Residues 843–991 form the (+)RNA virus helicase C-terminal domain; sequence SISRRCTLPV…IKEWEVEHAS (149 aa). One can recognise a Peptidase C9 domain in the interval 1004–1327; sequence DTFQNKANVC…NQLNAAFVGQ (324 aa). The tract at residues 1005 to 1024 is nucleolus localization signal; it reads TFQNKANVCWAKSLVPILET. The active-site For cysteine protease nsP2 activity is C1013. The Nuclear export signal motif lies at 1058 to 1067; it reads TRMYGVDLDS. Catalysis depends on H1083, which acts as the For cysteine protease nsP2 activity. The Nuclear localization signal motif lies at 1182–1186; sequence PTKRV. A Macro domain is found at 1334–1493; the sequence is APSYRVKRMD…KISEAIQMRT (160 aa). 6 residues coordinate ADP-D-ribose: D1343, N1357, G1365, G1445, V1446, and Y1447. C1595, C1597, C1620, and C1638 together coordinate Zn(2+). Residues 1651 to 1672 are disordered; it reads RVSPREYRPSQESVQEASTTTS. The interval 1659–1857 is HVD; the sequence is PSQESVQEAS…TCSDTDDELR (199 aa). The segment covering 1660 to 1672 has biased composition (polar residues); the sequence is SQESVQEASTTTS. Interaction with host CD2AP regions lie at residues 1726–1739 and 1756–1767; these read VMST…RRRR and PMASVRFFRAEL. The segment at 1745–1793 is interaction with host FHL1; sequence VTCDEREGNITPMASVRFFRAELCPVVQETAETRDTAMSLQAPPSTATE. The short motif at 1812 to 1815 is the FGDF; binding to host G3BP1 element; it reads FGDF. Residues 1820-1828 form an interaction with host CD2AP region; sequence IESLSSELL. The FGDF; binding to host G3BP1 signature appears at 1830–1833; the sequence is FGDF. One can recognise a RdRp catalytic domain in the interval 2228 to 2343; it reads DTVLETDIAS…HGVVSDELMA (116 aa).

Homododecamer. The enzyme forms a membrane-associated dodecameric ring with a central channel for the exchange of between the viral replication factories and the host cytoplasm. Interacts with non-structural protein 3. Interacts with RNA-directed RNA polymerase nsP4. Interacts with protease nsP2. Interacts with itself. Interacts with host STING1; this interaction results in inhibition of cGAS-STING signaling and increased levels of palmitoylation and protein stabilization of nsP1. Interacts with host TMEM45B; this interaction leads to viral replication inhibition. As to quaternary structure, interacts with mRNA-capping enzyme nsP1. Interacts (via C-terminus) with host G3BP1; this interaction inhibits the formation of host stress granules on viral mRNAs and the nsp3-G3BP1 complexes bind viral RNAs and probably orchestrate the assembly of viral replication complexes. Interacts (via C-terminus) with host G3BP2; this interaction inhibits the formation of host stress granules on viral mRNAs and the nsp3-G3BP2 complexes bind viral RNAs and probably orchestrate the assembly of viral replication complexes. Interacts (via C-terminus) with host NAP1L1. Interacts (via C-terminus) with host NAP1L4. Interacts (via C-terminus) with host DHX9; this interaction allows the recruitment of DHX9 to the plasma membrane, where it associates with viral replication complexes and may play a role in the translation-to-replication switch. Interacts (via C-terminus) with host FHL1 (via LIM domain 1); this interaction is required for viral RNA replication. Interacts (via C-terminus) with host CD2AP; this interaction plays a role in initiation of viral replication. Interacts (via C-terminus) with host SH3KBP1; this interaction plays a role in initiation of viral replication. In terms of assembly, interacts with mRNA-capping enzyme nsP1. Interacts with protease nsP2. interacts with itself. Interacts with host TMEM45B; this interaction leads to viral replication inhibition. Interacts with RNA-directed RNA polymerase nsP4. Interacts with mRNA-capping enzyme nsP1. Interacts with KPNA1/karyopherin-alpha1; this interaction probably allows the active transport of protease nsP2 into the host nucleus. Mg(2+) serves as cofactor. Requires Mn(2+) as cofactor. In terms of processing, specific enzymatic cleavages in vivo yield mature proteins. The processing of the polyprotein is temporally regulated. In early stages (1.7 hpi), P1234 is first cleaved in trans through its nsP2 protease activity, releasing P123 and nsP4, which associate to form the early replication complex. At the same time, P1234 is also cut at the nsP1/nsP2 site early in infection but with lower efficiency. After replication of the viral minus-strand RNAs (4 hpi), the polyproteins are cut at the nsP1/nsP2 and nsP2/nsP3 sites very efficiently, preventing accumulation of P123 and P1234 and allowing the formation of the late replication complex. NsP3/nsP4 site is not cleaved anymore and P34 is produced rather than nsP4. Post-translationally, specific enzymatic cleavages in vivo yield mature proteins. The processing of the polyprotein is temporally regulated. In early stages (1.7 hpi), P123 is cleaved at the nsP1/nsP2 site with low efficiency. After replication of the viral minus-strand RNAs (4 hpi), the polyproteins are cut at the nsP1/nsP2 and nsP2/nsP3 sites very efficiently, preventing accumulation of P123 and allowing the formation of the late replication complex. Palmitoylated by host palmitoyltransferases ZDHHC2 and ZDHHC19. Palmitoylation is increased by the interacton with host STING1. In terms of processing, phosphorylated by host on serines and threonines. Post-translationally, ubiquitinated; targets the protein for rapid degradation via the ubiquitin system. Nsp4 is present in extremely low quantities due to low frequency of translation through the amber stop-codon and the degradation by the ubiquitin pathway.

It localises to the host cytoplasmic vesicle membrane. The protein localises to the host cell membrane. The protein resides in the host cell projection. It is found in the host filopodium. Its subcellular location is the host nucleus. It localises to the host cytoplasm. The enzyme catalyses GTP + S-adenosyl-L-methionine = N(7)-methyl-GTP + S-adenosyl-L-homocysteine. The catalysed reaction is N(7)-methyl-GTP + L-histidyl-[protein] = N(tele)-(N(7)-methylguanosine 5'-phospho)-L-histidyl-[protein] + diphosphate. It carries out the reaction N(tele)-(N(7)-methylguanosine 5'-phospho)-L-histidyl-[protein] + a 5'-end diphospho-(purine-ribonucleoside) in mRNA + H(+) = a 5'-end (N(7)-methyl 5'-triphosphoguanosine)-(purine-ribonucleoside) in mRNA + L-histidyl-[protein]. It catalyses the reaction a 5'-end triphospho-ribonucleoside in mRNA + H2O = a 5'-end diphospho-ribonucleoside in mRNA + phosphate + H(+). The enzyme catalyses a ribonucleoside 5'-triphosphate + H2O = a ribonucleoside 5'-diphosphate + phosphate + H(+). The catalysed reaction is ATP + H2O = ADP + phosphate + H(+). It carries out the reaction RNA(n) + a ribonucleoside 5'-triphosphate = RNA(n+1) + diphosphate. It catalyses the reaction 4-O-(ADP-D-ribosyl)-L-aspartyl-[protein] + H2O = L-aspartyl-[protein] + ADP-D-ribose + H(+). The enzyme catalyses 5-O-(ADP-D-ribosyl)-L-glutamyl-[protein] + H2O = L-glutamyl-[protein] + ADP-D-ribose + H(+). The catalysed reaction is RNA(n) + ATP = RNA(n)-3'-adenine ribonucleotide + diphosphate. It carries out the reaction ADP-alpha-D-ribose 1''-phosphate + H2O = ADP-D-ribose + phosphate. Its function is as follows. Inactive precursor of the viral replicase, which is activated by cleavages carried out by the viral protease nsP2. Functionally, the early replication complex formed by the polyprotein P123 and nsP4 synthesizes minus-strand RNAs. As soon P123 is cleaved into mature proteins, the plus-strand RNAs synthesis begins. In terms of biological role, cytoplasmic capping enzyme that catalyzes two virus-specific reactions: methyltransferase and guanylyltransferase. mRNA-capping is necessary since all viral RNAs are synthesized in the cytoplasm, and host capping enzymes are restricted to the nucleus. The enzymatic reaction involves a covalent link between 7-methyl-GMP and nsP1, whereas eukaryotic capping enzymes form a covalent complex only with GMP. nsP1 capping consists in the following reactions: GTP is first methylated into 7-methyl-GMP and then is covalently linked to nsP1 to form the m7GMp-nsP1 complex from which 7-methyl-GMP complex is transferred to the mRNA to create the cap structure. NsP1 is also needed for the initiation of the minus-strand RNAs synthesis. At the initiation of virus replication, mediates the assembly of the viral replication complex made of the non-structural proteins, the association of this complex with the inner face of the plasma membrane and the formation of membranous spherules that serve as replication complex factories. Forms the neck of these spherules with a central channel for mediating communication and the passage of RNA, nucleotides, and small proteins between the viral replication complex and the host cytoplasm. Palmitoylated nsP1 is remodeling host cell cytoskeleton, and induces filopodium-like structure formation at the surface of the host cell. Multifunctional protein whose N-terminus is part of the RNA polymerase complex and displays NTPase, RNA triphosphatase and helicase activities. NTPase and RNA triphosphatase are involved in viral RNA capping and helicase keeps a check on the dsRNA replication intermediates. The C-terminus harbors a protease that specifically cleaves the polyproteins and releases the mature proteins. Required for the shutoff of minus-strand RNAs synthesis. Specifically inhibits the host IFN response by promoting the nuclear export of host STAT1. Also inhibits host transcription by inducing the rapid proteasome-dependent degradation of POLR2A, a catalytic subunit of the RNAPII complex. The resulting inhibition of cellular protein synthesis serves to ensure maximal viral gene expression and to evade host immune response. Its function is as follows. Seems to be essential for minus-strand RNAs and subgenomic 26S mRNAs synthesis. Displays mono-ADP-ribosylhydrolase activity. ADP-ribosylation is a post-translational modification that controls various processes of the host cell and the virus probably needs to revert it for optimal viral replication. Binds proteins of G3BP family and sequesters them into the viral RNA replication complexes thereby inhibiting the formation of host stress granules on viral mRNAs. The nsp3-G3BP complexes bind viral RNAs and probably orchestrate the assembly of viral replication complexes, thanks to the ability of G3BP family members to self-assemble and bind DNA. Functionally, RNA dependent RNA polymerase. Replicates genomic and antigenomic RNA by recognizing replications specific signals. The early replication complex formed by the polyprotein P123 and nsP4 synthesizes minus-strand RNAs. The late replication complex composed of fully processed nsP1-nsP4 is responsible for the production of genomic and subgenomic plus-strand RNAs. The sequence is that of Polyprotein P1234 from Chikungunya virus (strain S27-African prototype) (CHIKV).